The sequence spans 420 residues: Serine--tRNA ligase (420 aa).

Residue 229-231 (TAE) participates in L-serine binding. Position 260 to 262 (260 to 262 (RAE)) interacts with ATP. Glu283 provides a ligand contact to L-serine. 347-350 (EISS) is a binding site for ATP. Ser382 is a binding site for L-serine.

The protein belongs to the class-II aminoacyl-tRNA synthetase family. Type-1 seryl-tRNA synthetase subfamily. As to quaternary structure, homodimer. The tRNA molecule binds across the dimer.

Its subcellular location is the cytoplasm. The enzyme catalyses tRNA(Ser) + L-serine + ATP = L-seryl-tRNA(Ser) + AMP + diphosphate + H(+). The catalysed reaction is tRNA(Sec) + L-serine + ATP = L-seryl-tRNA(Sec) + AMP + diphosphate + H(+). The protein operates within aminoacyl-tRNA biosynthesis; selenocysteinyl-tRNA(Sec) biosynthesis; L-seryl-tRNA(Sec) from L-serine and tRNA(Sec): step 1/1. In terms of biological role, catalyzes the attachment of serine to tRNA(Ser). Is also able to aminoacylate tRNA(Sec) with serine, to form the misacylated tRNA L-seryl-tRNA(Sec), which will be further converted into selenocysteinyl-tRNA(Sec). The polypeptide is Serine--tRNA ligase (Caldicellulosiruptor saccharolyticus (strain ATCC 43494 / DSM 8903 / Tp8T 6331)).